We begin with the raw amino-acid sequence, 208 residues long: ATP-dependent Clp protease proteolytic subunit (208 aa).

The active-site Nucleophile is S111. The active site involves H136.

Belongs to the peptidase S14 family. Fourteen ClpP subunits assemble into 2 heptameric rings which stack back to back to give a disk-like structure with a central cavity, resembling the structure of eukaryotic proteasomes.

It localises to the cytoplasm. The enzyme catalyses Hydrolysis of proteins to small peptides in the presence of ATP and magnesium. alpha-casein is the usual test substrate. In the absence of ATP, only oligopeptides shorter than five residues are hydrolyzed (such as succinyl-Leu-Tyr-|-NHMec, and Leu-Tyr-Leu-|-Tyr-Trp, in which cleavage of the -Tyr-|-Leu- and -Tyr-|-Trp bonds also occurs).. In terms of biological role, cleaves peptides in various proteins in a process that requires ATP hydrolysis. Has a chymotrypsin-like activity. Plays a major role in the degradation of misfolded proteins. This is ATP-dependent Clp protease proteolytic subunit from Vibrio campbellii (strain ATCC BAA-1116).